We begin with the raw amino-acid sequence, 409 residues long: Nucleoprotein (409 aa).

5 disordered regions span residues 1 to 32, 44 to 69, 121 to 145, 164 to 195, and 238 to 259; these read MASG…SSGN, LNSP…QQHG, ADVK…LRFS, RSGR…SEGD, and VDQV…DKMN. Positions 15–31 are enriched in low complexity; that stretch reads PVIKLGGPKPPKVGSSG. Residues 29–160 form an RNA-binding region; the sequence is SSGNASWFQA…GNFRWDFIPL (132 aa). The CoV N NTD domain occupies 31-156; it reads GNASWFQAIK…GGPDGNFRWD (126 aa). A compositionally biased stretch (low complexity) spans 164–179; the sequence is RSGRSTAASSAASSRA. Composition is skewed to basic and acidic residues over residues 180–192 and 247–259; these read PSRD…RSGS and KGKE…DKMN. Ser-190 and Ser-192 each carry phosphoserine; by host. In terms of domain architecture, CoV N CTD spans 215-331; it reads TKAKADEMAH…QCVDGVGTRP (117 aa). Residues 226-333 form a dimerization region; the sequence is RYCKRTIPPG…VDGVGTRPKD (108 aa). Residues Cys-320 and Cys-323 are joined by a disulfide bond. The tract at residues 326–409 is disordered; that stretch reads GVGTRPKDDE…GDSALGENEL (84 aa). The segment covering 341–358 has biased composition (low complexity); the sequence is RSSSRPATRTSSPALRQQ. Basic and acidic residues predominate over residues 368–384; the sequence is KQDDEVDKALTSDEERN. Phosphothreonine; by host is present on Thr-378. Phosphoserine; by host is present on Ser-379.

This sequence belongs to the gammacoronavirus nucleocapsid protein family. Homooligomer. Both monomeric and oligomeric forms interact with RNA. Interacts with protein M. Interacts with NSP3; this interaction serves to tether the genome to the newly translated replicase-transcriptase complex at a very early stage of infection. In terms of processing, ADP-ribosylated. The ADP-ribosylation is retained in the virion during infection. Phosphorylated on serine and threonine residues.

It localises to the virion. The protein resides in the host endoplasmic reticulum-Golgi intermediate compartment. The protein localises to the host Golgi apparatus. Its function is as follows. Packages the positive strand viral genome RNA into a helical ribonucleocapsid (RNP) and plays a fundamental role during virion assembly through its interactions with the viral genome and membrane protein M. Plays an important role in enhancing the efficiency of subgenomic viral RNA transcription as well as viral replication. This Gallus gallus (Chicken) protein is Nucleoprotein.